We begin with the raw amino-acid sequence, 413 residues long: Putative tRNA pseudouridine synthase C16C4.06c (413 aa).

Aspartate 96 acts as the Nucleophile in catalysis. Position 154 (tyrosine 154) interacts with substrate.

Belongs to the tRNA pseudouridine synthase TruA family.

It is found in the cytoplasm. It localises to the nucleus. The enzyme catalyses a uridine in tRNA = a pseudouridine in tRNA. This is Putative tRNA pseudouridine synthase C16C4.06c from Schizosaccharomyces pombe (strain 972 / ATCC 24843) (Fission yeast).